We begin with the raw amino-acid sequence, 165 residues long: Phosphopantetheine adenylyltransferase (165 aa).

T11 provides a ligand contact to substrate. Residues 11-12 (TF) and H19 contribute to the ATP site. Residues K43, V75, and R89 each contribute to the substrate site. ATP is bound by residues 90–92 (GLR), E100, and 125–131 (YQFISST).

This sequence belongs to the bacterial CoaD family. Homohexamer. Mg(2+) serves as cofactor.

The protein localises to the cytoplasm. The enzyme catalyses (R)-4'-phosphopantetheine + ATP + H(+) = 3'-dephospho-CoA + diphosphate. It participates in cofactor biosynthesis; coenzyme A biosynthesis; CoA from (R)-pantothenate: step 4/5. Its function is as follows. Reversibly transfers an adenylyl group from ATP to 4'-phosphopantetheine, yielding dephospho-CoA (dPCoA) and pyrophosphate. This chain is Phosphopantetheine adenylyltransferase, found in Acidovorax ebreus (strain TPSY) (Diaphorobacter sp. (strain TPSY)).